Here is a 330-residue protein sequence, read N- to C-terminus: Lipoyl synthase (330 aa).

[4Fe-4S] cluster contacts are provided by cysteine 77, cysteine 82, cysteine 88, cysteine 103, cysteine 107, cysteine 110, and serine 317. The Radical SAM core domain occupies 89–306 (FNHGTATFMI…RSEAEKMGFE (218 aa)).

It belongs to the radical SAM superfamily. Lipoyl synthase family. [4Fe-4S] cluster serves as cofactor.

The protein resides in the cytoplasm. The enzyme catalyses [[Fe-S] cluster scaffold protein carrying a second [4Fe-4S](2+) cluster] + N(6)-octanoyl-L-lysyl-[protein] + 2 oxidized [2Fe-2S]-[ferredoxin] + 2 S-adenosyl-L-methionine + 4 H(+) = [[Fe-S] cluster scaffold protein] + N(6)-[(R)-dihydrolipoyl]-L-lysyl-[protein] + 4 Fe(3+) + 2 hydrogen sulfide + 2 5'-deoxyadenosine + 2 L-methionine + 2 reduced [2Fe-2S]-[ferredoxin]. It participates in protein modification; protein lipoylation via endogenous pathway; protein N(6)-(lipoyl)lysine from octanoyl-[acyl-carrier-protein]: step 2/2. Catalyzes the radical-mediated insertion of two sulfur atoms into the C-6 and C-8 positions of the octanoyl moiety bound to the lipoyl domains of lipoate-dependent enzymes, thereby converting the octanoylated domains into lipoylated derivatives. This is Lipoyl synthase from Haemophilus ducreyi (strain 35000HP / ATCC 700724).